Reading from the N-terminus, the 1196-residue chain is Ice nucleation protein (1196 aa).

The tract at residues 172-1147 (ATYGSTLSGD…LSAGEDSTLI (976 aa)) is octapeptide periodicity. Disordered stretches follow at residues 269-304 (GYGS…GYGS), 319-352 (GSTQ…GYGS), and 415-442 (GSTQ…GSNL). 2 stretches are compositionally biased toward polar residues: residues 271-298 (GSTQ…GSNL) and 319-346 (GSTQ…GSNL).

This sequence belongs to the bacterial ice nucleation protein family. As to quaternary structure, membrane environment or aggregation seems to be required for ice nucleation activity.

Its subcellular location is the cell outer membrane. Its function is as follows. Ice nucleation proteins enable bacteria to nucleate crystallization in supercooled water. This chain is Ice nucleation protein (inaV), found in Pseudomonas syringae.